The sequence spans 413 residues: Acetate kinase (413 aa).

Residue asparagine 7 participates in Mg(2+) binding. Residue lysine 14 participates in ATP binding. Arginine 98 lines the substrate pocket. The active-site Proton donor/acceptor is aspartate 157. ATP contacts are provided by residues 216 to 220, 291 to 293, and 339 to 343; these read HIGNG, DLR, and GVGEN. Glutamate 392 contributes to the Mg(2+) binding site.

It belongs to the acetokinase family. As to quaternary structure, homodimer. Mg(2+) is required as a cofactor. The cofactor is Mn(2+).

Its subcellular location is the cytoplasm. It carries out the reaction acetate + ATP = acetyl phosphate + ADP. The protein operates within metabolic intermediate biosynthesis; acetyl-CoA biosynthesis; acetyl-CoA from acetate: step 1/2. In terms of biological role, catalyzes the formation of acetyl phosphate from acetate and ATP. Can also catalyze the reverse reaction. The chain is Acetate kinase from Synechocystis sp. (strain ATCC 27184 / PCC 6803 / Kazusa).